A 1099-amino-acid chain; its full sequence is Solute carrier family 12 member 1 (1099 aa).

At 1–177 the chain is on the cytoplasmic side; the sequence is MSLNNSSSVF…EDNKAGAVKF (177 aa). Residues 20–23 carry the RFXV motif motif; sequence RFQV. Phosphoserine occurs at positions 60 and 90. Phosphothreonine occurs at positions 94, 99, 104, and 117. Serine 119 bears the Phosphoserine mark. A Phosphoserine; by AMPK modification is found at serine 129. Serine 147 bears the Phosphoserine mark. Residues 147–169 form a disordered region; it reads SADRVANGEGMPGEEHAENKEED. The segment covering 159–169 has biased composition (basic and acidic residues); the sequence is GEEHAENKEED. Residues 178 to 198 traverse the membrane as a helical segment; that stretch reads GWVKGVLVRCMLNIWGVMLFI. At 199–201 the chain is on the extracellular side; that stretch reads RLS. A helical membrane pass occupies residues 202 to 222; that stretch reads WIVGEAGIGLGVVIILLSTMV. Over 223 to 259 the chain is Cytoplasmic; the sequence is TSITGLSTSAIATNGFVRGGGAYYLISRSLGPEFGGS. Residues 260-280 traverse the membrane as a helical segment; that stretch reads IGLIFAFANAVAVAMYVVGFA. At 281–302 the chain is on the extracellular side; it reads ETVVDLLKESDSMMVDPTNDIR. The chain crosses the membrane as a helical span at residues 303–323; sequence IIGSITVVILLGISVAGMEWE. The Cytoplasmic segment spans residues 324 to 327; it reads AKAQ. A helical transmembrane segment spans residues 328–348; sequence VILLIILLIAIANFFIGTVIP. Topologically, residues 349-379 are extracellular; sequence SNNEKKSRGFFNYQASIFAENFGPSFTKGEG. The chain crosses the membrane as a helical span at residues 380 to 400; the sequence is FFSVFAIFFPAATGILAGANI. The Cytoplasmic portion of the chain corresponds to 401–417; sequence SGDLEDPQDAIPRGTML. The chain crosses the membrane as a helical span at residues 418–438; that stretch reads AIFITTVAYIGVAICVGACVV. The Extracellular portion of the chain corresponds to 439–550; that stretch reads RDATGSMNDT…NNEPLRGYIL (112 aa). N-linked (GlcNAc...) asparagine glycans are attached at residues asparagine 446 and asparagine 456. Helical transmembrane passes span 551-571 and 572-592; these read TFVI…APII and SNFF…ASYA. Residues 593-609 are Extracellular-facing; it reads KSPGWRPAYGIYNMWVS. A helical membrane pass occupies residues 610-630; that stretch reads LFGAVLCCAVMFVINWWAAVI. The Cytoplasmic segment spans residues 631–1099; it reads TYVIEFFLYI…NHKNVLTFYS (469 aa).

Belongs to the SLC12A transporter family. In terms of assembly, when phosphorylated, interacts with PPP3CB. Phosphorylated at Ser-90, Thr-99 and Thr-104 by OXSR1/OSR1 and STK39/SPAK downstream of WNK kinases (WNK1, WNK2, WNK3 or WNK4), promoting its activity. In terms of tissue distribution, predominant in kidney. The 3 isoforms are differentially distributed within the kidney: B almost exclusively in cortex, F almost exclusively in medulla, and A about equally distributed.

The protein localises to the apical cell membrane. It catalyses the reaction K(+)(out) + 2 chloride(out) + Na(+)(out) = K(+)(in) + 2 chloride(in) + Na(+)(in). With respect to regulation, activated following phosphorylation by OXSR1/OSR1 and STK39/SPAK downstream of WNK kinases (WNK1, WNK2, WNK3 or WNK4). Functionally, renal sodium, potassium and chloride ion cotransporter that mediates the transepithelial NaCl reabsorption in the thick ascending limb and plays an essential role in the urinary concentration and volume regulation. Electrically silent transporter system. The polypeptide is Solute carrier family 12 member 1 (SLC12A1) (Oryctolagus cuniculus (Rabbit)).